The chain runs to 414 residues: 11-beta-hydroxysteroid dehydrogenase type 2 (414 aa).

4 helical membrane passes run 3 to 23 (DFAV…GGAV), 26 to 46 (FLAF…ATLL), 52 to 72 (ALCM…WLYF), and 341 to 361 (YYAG…PLSI). Residues 382–414 (KQQGLSPNDNNNSIKENMNDSSSNNSNFTKCID) form a disordered region. Positions 384–397 (QGLSPNDNNNSIKE) are enriched in polar residues.

This sequence belongs to the short-chain dehydrogenases/reductases (SDR) family. As to expression, broadly expressed in peripheral (brain, gill, eye, heart, liver, head kidney, posterior kidney, and gut).

The protein localises to the membrane. It catalyses the reaction an 11beta-hydroxysteroid + NAD(+) = an 11-oxosteroid + NADH + H(+). It carries out the reaction cortisol + NAD(+) = cortisone + NADH + H(+). The catalysed reaction is corticosterone + NAD(+) = 11-dehydrocorticosterone + NADH + H(+). The enzyme catalyses 11beta,17beta-dihydroxyandrost-4-ene-3-one + NAD(+) = 17beta-hydroxyandrost-4-ene-3,11-dione + NADH + H(+). It catalyses the reaction 11beta-hydroxyandrost-4-ene-3,17-dione + NAD(+) = androst-4-ene-3,11,17-trione + NADH + H(+). It participates in steroid metabolism. Functionally, catalyzes the conversion of biologically active 11beta-hydroxyglucocorticoids (11beta-hydroxysteroid) such as cortisol, to inactive 11-ketoglucocorticoids (11-oxosteroid) such as cortisone, in the presence of NAD(+). Cortisol is the primary glucocorticoid in teleosts and is released to increase glucose bioavailability in order to meet the increased energy demands in response to stress. Functions as a dehydrogenase (oxidase), thereby decreasing the concentration of active glucocorticoids, regulating the hypothalamus-pituitary-interrenal (HPI) axis function in adult fish. Decreasing the excess glucocorticoids may be of relevance to brain function and neural proliferation. Plays a key role by catalyzing the oxidation of 11beta-hydroxytestosterone (11beta,17beta-dihydroxyandrost-4-ene-3-one) to 11-ketotestosterone (17beta-hydroxyandrost-4-ene-3,11-dione), the major fish androgen, that activates androgen receptor transcriptional activity. Catalyzes the conversion of 11beta-hydroxyandrostenedione (11beta-hydroxyandrost-4-ene-3,17-dione) to 11-ketoandrostenedione (androst-4-ene-3,11,17-trione), which can be further metabolized to 11-ketotestosterone. Exerts a dual role in fish by inactivating glucocorticoids and activating androgens. This Danio rerio (Zebrafish) protein is 11-beta-hydroxysteroid dehydrogenase type 2 (hsd11b2).